We begin with the raw amino-acid sequence, 515 residues long: Maturase K (515 aa).

Belongs to the intron maturase 2 family. MatK subfamily.

It is found in the plastid. Its subcellular location is the chloroplast. Its function is as follows. Usually encoded in the trnK tRNA gene intron. Probably assists in splicing its own and other chloroplast group II introns. The polypeptide is Maturase K (Sorghum bicolor (Sorghum)).